Here is a 421-residue protein sequence, read N- to C-terminus: Serine--tRNA ligase (421 aa).

Thr-231–Glu-233 is an L-serine binding site. Arg-262–Glu-264 serves as a coordination point for ATP. Glu-285 provides a ligand contact to L-serine. Glu-349–Ser-352 lines the ATP pocket. Residue Ser-384 coordinates L-serine.

It belongs to the class-II aminoacyl-tRNA synthetase family. Type-1 seryl-tRNA synthetase subfamily. In terms of assembly, homodimer. The tRNA molecule binds across the dimer.

It localises to the cytoplasm. It catalyses the reaction tRNA(Ser) + L-serine + ATP = L-seryl-tRNA(Ser) + AMP + diphosphate + H(+). It carries out the reaction tRNA(Sec) + L-serine + ATP = L-seryl-tRNA(Sec) + AMP + diphosphate + H(+). The protein operates within aminoacyl-tRNA biosynthesis; selenocysteinyl-tRNA(Sec) biosynthesis; L-seryl-tRNA(Sec) from L-serine and tRNA(Sec): step 1/1. Catalyzes the attachment of serine to tRNA(Ser). Is also able to aminoacylate tRNA(Sec) with serine, to form the misacylated tRNA L-seryl-tRNA(Sec), which will be further converted into selenocysteinyl-tRNA(Sec). In Methylacidiphilum infernorum (isolate V4) (Methylokorus infernorum (strain V4)), this protein is Serine--tRNA ligase.